Here is a 143-residue protein sequence, read N- to C-terminus: Antiholin-like protein LrgA (143 aa).

4 helical membrane-spanning segments follow: residues 6 to 26, 30 to 50, 61 to 81, and 97 to 117; these read VYSF…SNII, LPIP…LLCL, LGTA…ISVI, and VIVV…QFIL.

The protein belongs to the CidA/LrgA family. LrgA subfamily.

The protein resides in the cell membrane. Inhibits the expression or activity of extracellular murein hydrolases by interacting, possibly with LrgB, with the holin-like protein CidA. The LrgAB and CidA proteins may affect the proton motive force of the membrane. May be involved in programmed cell death (PCD), possibly triggering PCD in response to antibiotics and environmental stresses. In Bacillus cereus (strain AH187), this protein is Antiholin-like protein LrgA.